Here is a 117-residue protein sequence, read N- to C-terminus: Small ribosomal subunit protein bS6 (117 aa).

It belongs to the bacterial ribosomal protein bS6 family.

Its function is as follows. Binds together with bS18 to 16S ribosomal RNA. The chain is Small ribosomal subunit protein bS6 from Porphyromonas gingivalis (strain ATCC BAA-308 / W83).